Here is a 510-residue protein sequence, read N- to C-terminus: NAD(P)H-quinone oxidoreductase subunit 2 B, chloroplastic (510 aa).

Helical transmembrane passes span leucine 24 to leucine 44, isoleucine 57 to phenylalanine 77, isoleucine 99 to isoleucine 119, methionine 124 to cysteine 144, leucine 149 to tyrosine 169, tyrosine 183 to glycine 203, proline 227 to alanine 247, tryptophan 295 to isoleucine 315, methionine 323 to aspartate 343, tyrosine 354 to leucine 374, alanine 395 to phenylalanine 415, leucine 418 to leucine 438, and leucine 482 to valine 502.

It belongs to the complex I subunit 2 family. In terms of assembly, NDH is composed of at least 16 different subunits, 5 of which are encoded in the nucleus.

The protein resides in the plastid. It localises to the chloroplast thylakoid membrane. The catalysed reaction is a plastoquinone + NADH + (n+1) H(+)(in) = a plastoquinol + NAD(+) + n H(+)(out). It carries out the reaction a plastoquinone + NADPH + (n+1) H(+)(in) = a plastoquinol + NADP(+) + n H(+)(out). Its function is as follows. NDH shuttles electrons from NAD(P)H:plastoquinone, via FMN and iron-sulfur (Fe-S) centers, to quinones in the photosynthetic chain and possibly in a chloroplast respiratory chain. The immediate electron acceptor for the enzyme in this species is believed to be plastoquinone. Couples the redox reaction to proton translocation, and thus conserves the redox energy in a proton gradient. The sequence is that of NAD(P)H-quinone oxidoreductase subunit 2 B, chloroplastic from Manihot esculenta (Cassava).